Here is a 418-residue protein sequence, read N- to C-terminus: Phosphoglycerate kinase (418 aa).

Positions 24, 25, 26, 27, 40, 63, 64, 66, 67, 122, 123, 169, and 170 each coordinate (2R)-3-phosphoglycerate. Gly213 is a binding site for ADP. Gly213 lines the CDP pocket. Residues Ala214 and Lys215 each contribute to the AMP site. ATP is bound at residue Ala214. Position 214 (Ala214) interacts with Mg(2+). The Mg(2+) site is built by Ala217 and Asp218. CDP is bound at residue Asp218. Lys219 contacts AMP. Lys219 is a binding site for ATP. Residue Gly237 coordinates ADP. Position 237 (Gly237) interacts with CDP. AMP is bound by residues Gly238 and Gly312. Positions 238 and 312 each coordinate ATP. Gly337 and Phe342 together coordinate CDP. Phe342 contacts ADP. Glu343 is an AMP binding site. ATP-binding residues include Glu343, Asp374, and Thr375. Asp374 contributes to the Mg(2+) binding site.

It belongs to the phosphoglycerate kinase family. As to quaternary structure, monomer. Mg(2+) serves as cofactor.

The enzyme catalyses (2R)-3-phosphoglycerate + ATP = (2R)-3-phospho-glyceroyl phosphate + ADP. It functions in the pathway carbohydrate degradation; glycolysis; pyruvate from D-glyceraldehyde 3-phosphate: step 2/5. This chain is Phosphoglycerate kinase (PGK), found in Euplotes crassus.